The sequence spans 166 residues: Phosphopantetheine adenylyltransferase (166 aa).

Residue Ser11 coordinates substrate. ATP is bound by residues 11–12 and His19; that span reads SF. Positions 43, 76, and 90 each coordinate substrate. ATP contacts are provided by residues 91–93, Glu101, and 126–132; these read GLR and YRYFSSS.

It belongs to the bacterial CoaD family. In terms of assembly, homohexamer. Mg(2+) is required as a cofactor.

Its subcellular location is the cytoplasm. The enzyme catalyses (R)-4'-phosphopantetheine + ATP + H(+) = 3'-dephospho-CoA + diphosphate. It participates in cofactor biosynthesis; coenzyme A biosynthesis; CoA from (R)-pantothenate: step 4/5. Functionally, reversibly transfers an adenylyl group from ATP to 4'-phosphopantetheine, yielding dephospho-CoA (dPCoA) and pyrophosphate. This is Phosphopantetheine adenylyltransferase from Streptococcus mutans serotype c (strain ATCC 700610 / UA159).